Here is a 174-residue protein sequence, read N- to C-terminus: Cytochrome c-type biogenesis protein CcmE (174 aa).

At 1–7 the chain is on the cytoplasmic side; the sequence is MTRKSRR. A helical; Signal-anchor for type II membrane protein transmembrane segment spans residues 8-28; the sequence is LILIGAGLGVLALAAGLILTA. At 29-174 the chain is on the periplasmic side; it reads LNDTIVFFRT…PAVSPARSTP (146 aa). Residues histidine 121 and tyrosine 125 each contribute to the heme site. Residues 130 to 144 show a composition bias toward basic and acidic residues; it reads VADALKKSGHWKEGE. The segment at 130–174 is disordered; sequence VADALKKSGHWKEGEEGGPVPPAAKTPGPQSSAAPPAVSPARSTP. The segment covering 156–174 has biased composition (low complexity); the sequence is PGPQSSAAPPAVSPARSTP.

The protein belongs to the CcmE/CycJ family.

It localises to the cell inner membrane. In terms of biological role, heme chaperone required for the biogenesis of c-type cytochromes. Transiently binds heme delivered by CcmC and transfers the heme to apo-cytochromes in a process facilitated by CcmF and CcmH. In Azorhizobium caulinodans (strain ATCC 43989 / DSM 5975 / JCM 20966 / LMG 6465 / NBRC 14845 / NCIMB 13405 / ORS 571), this protein is Cytochrome c-type biogenesis protein CcmE.